A 265-amino-acid polypeptide reads, in one-letter code: R-spondin-1 (265 aa).

A signal peptide spans 1–20; the sequence is MRLGLCVVALVLSWTHIAVG. FU repeat units lie at residues 34 to 85 and 91 to 135; these read AEGS…GYFD and MNKC…GSTA. Disulfide bonds link C40–C47, C44–C53, C56–C75, C79–C94, C97–C105, C102–C111, C114–C125, C129–C142, C148–C190, C159–C166, and C199–C206. N-linked (GlcNAc...) asparagine glycosylation is present at N137. A TSP type-1 domain is found at 147–207; sequence QCEMSEWSPW…KCTVRRTPCP (61 aa). A glycan (C-linked (Man) tryptophan) is linked at W153. The C-linked (Man) tryptophan; by DPY19L3 glycan is linked to W156. Disordered regions lie at residues 173–192 and 201–265; these read EERTRRVLHAPGGDHTTCSD and VRRT…TWAQ. Residues 245–257 show a composition bias toward low complexity; the sequence is QQQPQPGTTGPLT.

It belongs to the R-spondin family. In terms of assembly, interacts with ZNRF3; promoting indirect interaction between ZNRF3 and LGR4 and membrane clearance of ZNRF3. Identified in a complex composed of RNF43, LGR5 and RSPO1. Interacts with the extracellular domain of FZD8 and LRP6. It however does not form a ternary complex with FZD8 and LRP6. Interacts with WNT1. Binds heparin. Interacts with LGR4, LGR5 and LGR6. Interacts (via FU repeats) with KREM1. C-, and N-glycosylated. N-glycosylation at Asn-137, negatively influences its secretion and enhancing effect on Wnt/beta-catenin signaling. C-mannosylation at Trp-156 by DPY19L3 is required for its secretion an regulates the enhancing activity of Wnt signaling. In terms of tissue distribution, expressed in the dorsal part of the neural tube on 10 and 12 dpc, especially in the boundary region between roof plate and neuroepithelium. This expression is enhanced in the rostral part. Also expressed in other tissues such as truncal region neighboring forelimbs and mesenchymal tissues around the nasal cavity.

Its subcellular location is the secreted. It localises to the nucleus. Functionally, activator of the canonical Wnt signaling pathway by acting as a ligand for LGR4-6 receptors. Upon binding to LGR4-6 (LGR4, LGR5 or LGR6), LGR4-6 associate with phosphorylated LRP6 and frizzled receptors that are activated by extracellular Wnt receptors, triggering the canonical Wnt signaling pathway to increase expression of target genes. Also regulates the canonical Wnt/beta-catenin-dependent pathway and non-canonical Wnt signaling by acting as an inhibitor of ZNRF3, an important regulator of the Wnt signaling pathway. Acts as a ligand for frizzled FZD8 and LRP6. May negatively regulate the TGF-beta pathway. Has a essential roles in ovary determination. Regulates Wnt signaling by antagonizing DKK1/KREM1-mediated internalization of LRP6 through an interaction with KREM1. The polypeptide is R-spondin-1 (Rspo1) (Mus musculus (Mouse)).